The sequence spans 338 residues: Holliday junction branch migration complex subunit RuvB (338 aa).

Positions methionine 1 to tyrosine 181 are large ATPase domain (RuvB-L). ATP is bound by residues leucine 20, arginine 21, glycine 62, lysine 65, threonine 66, threonine 67, glutamate 128–phenylalanine 130, arginine 171, tyrosine 181, and arginine 218. Position 66 (threonine 66) interacts with Mg(2+). The small ATPAse domain (RuvB-S) stretch occupies residues threonine 182–glutamate 252. Residues glutamate 255–phenylalanine 338 are head domain (RuvB-H). DNA-binding residues include arginine 310 and arginine 315.

Belongs to the RuvB family. In terms of assembly, homohexamer. Forms an RuvA(8)-RuvB(12)-Holliday junction (HJ) complex. HJ DNA is sandwiched between 2 RuvA tetramers; dsDNA enters through RuvA and exits via RuvB. An RuvB hexamer assembles on each DNA strand where it exits the tetramer. Each RuvB hexamer is contacted by two RuvA subunits (via domain III) on 2 adjacent RuvB subunits; this complex drives branch migration. In the full resolvosome a probable DNA-RuvA(4)-RuvB(12)-RuvC(2) complex forms which resolves the HJ.

Its subcellular location is the cytoplasm. It catalyses the reaction ATP + H2O = ADP + phosphate + H(+). The RuvA-RuvB-RuvC complex processes Holliday junction (HJ) DNA during genetic recombination and DNA repair, while the RuvA-RuvB complex plays an important role in the rescue of blocked DNA replication forks via replication fork reversal (RFR). RuvA specifically binds to HJ cruciform DNA, conferring on it an open structure. The RuvB hexamer acts as an ATP-dependent pump, pulling dsDNA into and through the RuvAB complex. RuvB forms 2 homohexamers on either side of HJ DNA bound by 1 or 2 RuvA tetramers; 4 subunits per hexamer contact DNA at a time. Coordinated motions by a converter formed by DNA-disengaged RuvB subunits stimulates ATP hydrolysis and nucleotide exchange. Immobilization of the converter enables RuvB to convert the ATP-contained energy into a lever motion, pulling 2 nucleotides of DNA out of the RuvA tetramer per ATP hydrolyzed, thus driving DNA branch migration. The RuvB motors rotate together with the DNA substrate, which together with the progressing nucleotide cycle form the mechanistic basis for DNA recombination by continuous HJ branch migration. Branch migration allows RuvC to scan DNA until it finds its consensus sequence, where it cleaves and resolves cruciform DNA. The chain is Holliday junction branch migration complex subunit RuvB from Geotalea uraniireducens (strain Rf4) (Geobacter uraniireducens).